We begin with the raw amino-acid sequence, 96 residues long: Large ribosomal subunit protein bL21 (96 aa).

This sequence belongs to the bacterial ribosomal protein bL21 family. As to quaternary structure, part of the 50S ribosomal subunit. Contacts protein L20.

Its function is as follows. This protein binds to 23S rRNA in the presence of protein L20. This is Large ribosomal subunit protein bL21 from Hydrogenobaculum sp. (strain Y04AAS1).